Reading from the N-terminus, the 182-residue chain is ADP-ribosylation factor 3 (182 aa).

Residue G2 is the site of N-myristoyl glycine attachment. GTP is bound by residues 24–31, 67–71, and 126–129; these read GLDNAGKT, DLGGQ, and NKQD.

The protein belongs to the small GTPase superfamily. Arf family. In terms of assembly, interacts with GRIP; but preferentially when bound to GTP.

It is found in the golgi apparatus. GTP-binding protein involved in protein trafficking; may modulate vesicle budding and uncoating within the Golgi apparatus. The polypeptide is ADP-ribosylation factor 3 (ARF3) (Arabidopsis thaliana (Mouse-ear cress)).